The primary structure comprises 400 residues: Exodeoxyribonuclease 7 large subunit (400 aa).

This sequence belongs to the XseA family. As to quaternary structure, heterooligomer composed of large and small subunits.

The protein resides in the cytoplasm. The catalysed reaction is Exonucleolytic cleavage in either 5'- to 3'- or 3'- to 5'-direction to yield nucleoside 5'-phosphates.. In terms of biological role, bidirectionally degrades single-stranded DNA into large acid-insoluble oligonucleotides, which are then degraded further into small acid-soluble oligonucleotides. This chain is Exodeoxyribonuclease 7 large subunit, found in Clostridium perfringens (strain ATCC 13124 / DSM 756 / JCM 1290 / NCIMB 6125 / NCTC 8237 / Type A).